Here is a 400-residue protein sequence, read N- to C-terminus: NADH-ubiquinone oxidoreductase 49 kDa subunit (400 aa).

The protein belongs to the complex I 49 kDa subunit family.

It localises to the mitochondrion. It carries out the reaction a ubiquinone + NADH + 5 H(+)(in) = a ubiquinol + NAD(+) + 4 H(+)(out). Functionally, core subunit of the mitochondrial membrane respiratory chain NADH dehydrogenase (Complex I) that is believed to belong to the minimal assembly required for catalysis. Complex I functions in the transfer of electrons from NADH to the respiratory chain. The immediate electron acceptor for the enzyme is believed to be ubiquinone. Component of the iron-sulfur (IP) fragment of the enzyme. Component of the iron-sulfur (IP) fragment of the enzyme. In Paramecium tetraurelia, this protein is NADH-ubiquinone oxidoreductase 49 kDa subunit (NAD7).